A 394-amino-acid polypeptide reads, in one-letter code: Elongation factor Tu (394 aa).

One can recognise a tr-type G domain in the interval 10 to 204 (KPHVNVGTIG…HLDNYIPEPE (195 aa)). The interval 19-26 (GHVDHGKT) is G1. 19–26 (GHVDHGKT) is a GTP binding site. T26 is a binding site for Mg(2+). The tract at residues 60-64 (GITIN) is G2. The interval 81–84 (DCPG) is G3. GTP-binding positions include 81–85 (DCPGH) and 136–139 (NKCD). The interval 136-139 (NKCD) is G4. A G5 region spans residues 174–176 (SAL).

Belongs to the TRAFAC class translation factor GTPase superfamily. Classic translation factor GTPase family. EF-Tu/EF-1A subfamily. As to quaternary structure, monomer.

The protein resides in the cytoplasm. The catalysed reaction is GTP + H2O = GDP + phosphate + H(+). In terms of biological role, GTP hydrolase that promotes the GTP-dependent binding of aminoacyl-tRNA to the A-site of ribosomes during protein biosynthesis. The sequence is that of Elongation factor Tu from Histophilus somni (strain 129Pt) (Haemophilus somnus).